The primary structure comprises 55 residues: Large ribosomal subunit protein bL33 (55 aa).

It belongs to the bacterial ribosomal protein bL33 family.

This chain is Large ribosomal subunit protein bL33, found in Pseudarthrobacter chlorophenolicus (strain ATCC 700700 / DSM 12829 / CIP 107037 / JCM 12360 / KCTC 9906 / NCIMB 13794 / A6) (Arthrobacter chlorophenolicus).